A 131-amino-acid polypeptide reads, in one-letter code: L-ectoine synthase (131 aa).

Belongs to the ectoine synthase family.

It carries out the reaction (2S)-4-acetamido-2-aminobutanoate = L-ectoine + H2O. It functions in the pathway amine and polyamine biosynthesis; ectoine biosynthesis; L-ectoine from L-aspartate 4-semialdehyde: step 3/3. In terms of biological role, catalyzes the circularization of gamma-N-acetyl-alpha,gamma-diaminobutyric acid (ADABA) to ectoine (1,4,5,6-tetrahydro-2-methyl-4-pyrimidine carboxylic acid), which is an excellent osmoprotectant. The chain is L-ectoine synthase from Wolinella succinogenes (strain ATCC 29543 / DSM 1740 / CCUG 13145 / JCM 31913 / LMG 7466 / NCTC 11488 / FDC 602W) (Vibrio succinogenes).